The sequence spans 62 residues: Photosystem II reaction center protein Z (62 aa).

Transmembrane regions (helical) follow at residues 8–28 (AVFA…VVFA) and 41–61 (FSGT…NSLI).

Belongs to the PsbZ family. In terms of assembly, PSII is composed of 1 copy each of membrane proteins PsbA, PsbB, PsbC, PsbD, PsbE, PsbF, PsbH, PsbI, PsbJ, PsbK, PsbL, PsbM, PsbT, PsbY, PsbZ, Psb30/Ycf12, at least 3 peripheral proteins of the oxygen-evolving complex and a large number of cofactors. It forms dimeric complexes.

Its subcellular location is the plastid. The protein localises to the chloroplast thylakoid membrane. Its function is as follows. May control the interaction of photosystem II (PSII) cores with the light-harvesting antenna, regulates electron flow through the 2 photosystem reaction centers. PSII is a light-driven water plastoquinone oxidoreductase, using light energy to abstract electrons from H(2)O, generating a proton gradient subsequently used for ATP formation. This is Photosystem II reaction center protein Z from Vitis vinifera (Grape).